We begin with the raw amino-acid sequence, 346 residues long: Protein tas (346 aa).

Y53 functions as the Proton donor in the catalytic mechanism. Residue 234-244 (SCLGFGTLTGK) participates in NADP(+) binding.

It belongs to the aldo/keto reductase family. Aldo/keto reductase 2 subfamily.

The protein is Protein tas (tas) of Escherichia coli (strain K12).